A 358-amino-acid polypeptide reads, in one-letter code: PqqA peptide cyclase (358 aa).

Positions 4 to 219 constitute a Radical SAM core domain; it reads PSPPMSLLAE…VEAERAKGGL (216 aa). [4Fe-4S] cluster-binding residues include Cys18, Cys22, and Cys25.

The protein belongs to the radical SAM superfamily. PqqE family. Interacts with PqqD. The interaction is necessary for activity of PqqE. It depends on [4Fe-4S] cluster as a cofactor.

The enzyme catalyses [PQQ precursor protein] + S-adenosyl-L-methionine = E-Y cross-linked-[PQQ precursor protein] + 5'-deoxyadenosine + L-methionine + H(+). Its pathway is cofactor biosynthesis; pyrroloquinoline quinone biosynthesis. Its function is as follows. Catalyzes the cross-linking of a glutamate residue and a tyrosine residue in the PqqA protein as part of the biosynthesis of pyrroloquinoline quinone (PQQ). This Gluconobacter oxydans (strain 621H) (Gluconobacter suboxydans) protein is PqqA peptide cyclase.